Consider the following 193-residue polypeptide: MTDYLLLFVGTVLVNNFVLVKFLGLCPFMGVSKKLESAIGMGMATTFVMTLATIFSWIIDHLILVPLELVYLRTMAFILVIAVVVQFTEMVVRKTSPALYRLLGIYLPLITTNCAVLGVALLSINLNHTFMQSALYGFSAAVGFSLVMVLFAAIRERLVVADVPLPFRGNAIALVTAGLMSLAFMGFSGLVKF.

6 consecutive transmembrane segments (helical) span residues L5–L25, F47–L67, L72–V92, L102–L122, A134–I154, and A171–V191.

Belongs to the NqrDE/RnfAE family. The complex is composed of six subunits: RnfA, RnfB, RnfC, RnfD, RnfE and RnfG.

Its subcellular location is the cell inner membrane. Functionally, part of a membrane-bound complex that couples electron transfer with translocation of ions across the membrane. The sequence is that of Ion-translocating oxidoreductase complex subunit A from Cronobacter sakazakii (strain ATCC BAA-894) (Enterobacter sakazakii).